The following is a 585-amino-acid chain: Ankyrin repeat protein OPG003 (585 aa).

ANK repeat units lie at residues 66-98 (CGMS…NFDN), 172-220 (DGLT…NINA), 224-256 (IGNT…DTRI), 297-333 (EGHH…QKDE), and 336-365 (NTMT…DINL). A PRANC/F-box-like region spans residues 554–571 (LPPEIIRNIITKLSDYHL).

Belongs to the orthopoxvirus OPG003 family.

Functionally, may be involved in virus-host protein interaction through the ankyrin repeats and PRANC regions. This Homo sapiens (Human) protein is Ankyrin repeat protein OPG003 (OPG003).